The chain runs to 230 residues: CRP-like protein Clp (230 aa).

Residue 18–139 coordinates a nucleoside 3',5'-cyclic phosphate; the sequence is PSLTLDAGTI…APRILYAIGV (122 aa). One can recognise an HTH crp-type domain in the interval 158–230; sequence LDVTDRIVRT…GKTVVLYGTR (73 aa). Positions 190–209 form a DNA-binding region, H-T-H motif; the sequence is RQELARLVGCSREMAGRVLK.

As to quaternary structure, homodimer.

It localises to the cytoplasm. Allosterically inhibited by cyclic di-GMP (c-di-GMP), which binds to Clp and abolishes its ability to bind its target gene promoter. Global transcriptional regulator that regulates virulence factors production by activating or repressing the expression of a large set of genes in diffusible signal factor (DSF) pathway. The chain is CRP-like protein Clp (clp) from Xanthomonas campestris pv. campestris (strain 8004).